The sequence spans 652 residues: Carboxypeptidase Z (652 aa).

Residues 1-18 form the signal peptide; that stretch reads MPPPLPLLLLTVLVVAAA. In terms of domain architecture, FZ spans 27–160; sequence NPAGECHRPP…TREDEGCYDP (134 aa). 5 cysteine pairs are disulfide-bonded: C43–C109, C51–C102, C93–C129, C118–C157, and C122–C146. Positions 186 to 502 constitute a Peptidase M14 domain; that stretch reads SHHSYAQMVR…ESLLNFVETV (317 aa). Residues H248 and E251 each contribute to the Zn(2+) site. Residue N281 is glycosylated (N-linked (GlcNAc...) asparagine). H380 lines the Zn(2+) pocket. E472 (proton donor/acceptor) is an active-site residue. The segment at 595 to 629 is disordered; it reads LRRTGPHDPLGGASSLGEATEPDPLRARRQPSADG.

This sequence belongs to the peptidase M14 family. Zn(2+) is required as a cofactor. In placenta, it is present within invasive trophoblasts and in the surrounding extracellular space. Also present in amnion cells, but is not readily apparent in the extracellular matrix of this cell type. Present in normal pituitary gland and neoplastic pituitary gland (especially POMC-, GH- and PRL-producing adenomas) (at protein level). Widely expressed.

The protein localises to the secreted. It localises to the extracellular space. It is found in the extracellular matrix. With respect to regulation, inhibited by 2-mercaptomethyl-3-guanidinoethylthiopropanoic acid (MGTA) and guanidinoethylmercaptosuccinic acid (GEMSA). Inhibited by chelating agents such as EDTA and EGTA. In terms of biological role, cleaves substrates with C-terminal arginine residues. Probably modulates the Wnt signaling pathway, by cleaving some undefined protein. May play a role in cleavage during prohormone processing. This Homo sapiens (Human) protein is Carboxypeptidase Z (CPZ).